A 161-amino-acid polypeptide reads, in one-letter code: Ureidoglycolate lyase (161 aa).

The protein belongs to the ureidoglycolate lyase family. In terms of assembly, homodimer. Ni(2+) serves as cofactor.

It catalyses the reaction (S)-ureidoglycolate = urea + glyoxylate. The protein operates within nitrogen metabolism; (S)-allantoin degradation. Catalyzes the catabolism of the allantoin degradation intermediate (S)-ureidoglycolate, generating urea and glyoxylate. Involved in the utilization of allantoin as nitrogen source. This is Ureidoglycolate lyase from Rhodobacter capsulatus (strain ATCC BAA-309 / NBRC 16581 / SB1003).